The chain runs to 343 residues: Anthranilate phosphoribosyltransferase (343 aa).

5-phospho-alpha-D-ribose 1-diphosphate is bound by residues glycine 84, glycine 87 to aspartate 88, threonine 92, asparagine 94 to threonine 97, lysine 112 to serine 120, and serine 124. Glycine 84 lines the anthranilate pocket. Serine 96 serves as a coordination point for Mg(2+). Asparagine 115 lines the anthranilate pocket. Arginine 170 contacts anthranilate. Mg(2+) is bound by residues aspartate 229 and glutamate 230.

Belongs to the anthranilate phosphoribosyltransferase family. As to quaternary structure, homodimer. Mg(2+) is required as a cofactor.

It carries out the reaction N-(5-phospho-beta-D-ribosyl)anthranilate + diphosphate = 5-phospho-alpha-D-ribose 1-diphosphate + anthranilate. It participates in amino-acid biosynthesis; L-tryptophan biosynthesis; L-tryptophan from chorismate: step 2/5. In terms of biological role, catalyzes the transfer of the phosphoribosyl group of 5-phosphorylribose-1-pyrophosphate (PRPP) to anthranilate to yield N-(5'-phosphoribosyl)-anthranilate (PRA). The protein is Anthranilate phosphoribosyltransferase of Burkholderia multivorans (strain ATCC 17616 / 249).